We begin with the raw amino-acid sequence, 239 residues long: Endonuclease V (239 aa).

D50 and D118 together coordinate Mg(2+).

Belongs to the endonuclease V family. The cofactor is Mg(2+).

It localises to the cytoplasm. It carries out the reaction Endonucleolytic cleavage at apurinic or apyrimidinic sites to products with a 5'-phosphate.. Its function is as follows. DNA repair enzyme involved in the repair of deaminated bases. Selectively cleaves double-stranded DNA at the second phosphodiester bond 3' to a deoxyinosine leaving behind the intact lesion on the nicked DNA. This Xylella fastidiosa (strain Temecula1 / ATCC 700964) protein is Endonuclease V.